A 713-amino-acid chain; its full sequence is Phosphoribosylformylglycinamidine synthase subunit PurL (713 aa).

Residue His-34 is part of the active site. ATP contacts are provided by Tyr-37 and Arg-73. Mg(2+) is bound at residue Glu-75. Substrate-binding positions include 76–79 (SHNH) and Arg-98. His-77 serves as the catalytic Proton acceptor. Asp-99 is a binding site for Mg(2+). Gln-221 is a binding site for substrate. Residue Asp-249 participates in Mg(2+) binding. 292–294 (ESQ) contributes to the substrate binding site. ATP contacts are provided by Asp-474 and Gly-511. Residue Ser-514 coordinates substrate.

Belongs to the FGAMS family. In terms of assembly, monomer. Part of the FGAM synthase complex composed of 1 PurL, 1 PurQ and 2 PurS subunits.

It is found in the cytoplasm. The enzyme catalyses N(2)-formyl-N(1)-(5-phospho-beta-D-ribosyl)glycinamide + L-glutamine + ATP + H2O = 2-formamido-N(1)-(5-O-phospho-beta-D-ribosyl)acetamidine + L-glutamate + ADP + phosphate + H(+). Its pathway is purine metabolism; IMP biosynthesis via de novo pathway; 5-amino-1-(5-phospho-D-ribosyl)imidazole from N(2)-formyl-N(1)-(5-phospho-D-ribosyl)glycinamide: step 1/2. Its function is as follows. Part of the phosphoribosylformylglycinamidine synthase complex involved in the purines biosynthetic pathway. Catalyzes the ATP-dependent conversion of formylglycinamide ribonucleotide (FGAR) and glutamine to yield formylglycinamidine ribonucleotide (FGAM) and glutamate. The FGAM synthase complex is composed of three subunits. PurQ produces an ammonia molecule by converting glutamine to glutamate. PurL transfers the ammonia molecule to FGAR to form FGAM in an ATP-dependent manner. PurS interacts with PurQ and PurL and is thought to assist in the transfer of the ammonia molecule from PurQ to PurL. The sequence is that of Phosphoribosylformylglycinamidine synthase subunit PurL from Ignicoccus hospitalis (strain KIN4/I / DSM 18386 / JCM 14125).